We begin with the raw amino-acid sequence, 511 residues long: Myrosinase 5 (511 aa).

The N-terminal stretch at 1–23 (MAIPKAHYSLAVLVLLFVVVSSS) is a signal peptide. 3 disulfides stabilise this stretch: Cys-31–Cys-450, Cys-39–Cys-445, and Cys-230–Cys-233. N-linked (GlcNAc...) asparagine glycans are attached at residues Asn-46 and Asn-53. A beta-D-glucoside-binding positions include Gln-64, His-165, and 210–211 (NQ). The N-linked (GlcNAc...) asparagine glycan is linked to Asn-222. 2 residues coordinate a beta-D-glucoside: Tyr-351 and Glu-418. The active-site Nucleophile is Glu-418. An N-linked (GlcNAc...) asparagine glycan is attached at Asn-428. Residues Trp-467, 474 to 475 (EF), and Phe-483 contribute to the a beta-D-glucoside site. A glycan (N-linked (GlcNAc...) asparagine) is linked at Asn-489.

This sequence belongs to the glycosyl hydrolase 1 family. In terms of tissue distribution, specifically expressed in roots.

It carries out the reaction a thioglucoside + H2O = a sugar + a thiol.. The enzyme catalyses Hydrolysis of terminal, non-reducing beta-D-glucosyl residues with release of beta-D-glucose.. Functionally, hydrolyzes sinigrin and, with lower efficiency, p-nitrophenyl beta-D-glucoside. The polypeptide is Myrosinase 5 (Arabidopsis thaliana (Mouse-ear cress)).